A 36-amino-acid chain; its full sequence is uncharacterized protein (36 aa).

A helical transmembrane segment spans residues 13–35; the sequence is SVILSPFPCCVLKSYLTVIYISF.

It is found in the host membrane. This is an uncharacterized protein from Pseudoalteromonas espejiana (Bacteriophage PM2).